The primary structure comprises 555 residues: MGGQTVWMTLSFKLLLYYCMISLLMPAIFILATRAQVDKFRKFNESTQTKSSQELFEEAFEEQGYYLQRLFLQYGDNGTLTYEGLQKLLGSLGLGEVSVLEIRHGEAKHPSQSISHSHSHEDHHPSQGTTNSPPLRESLDAKSALSGSPAELGRSDYFLHPALRNKQEESVSLLSDHPTEKHLHGNCLNVTQLLWNFGLGQASHITPAHFTFLCPALLYQIESGVCLRHTEDHSQASKTSEGFLIALGWASLALLVISLPSLVALGMAPLLQPSVLQVFLCPMAGMAVGTLCGDALLHLMPHAIFSQHTDHQNAVFKGLSVLGGLYLLFIFESLLGLKQHFKNLKRRKHDAECGRELDALQGTSSANQNESSGHGHSHGQAEPGQTGIRSMAWMVVMGDGIHNLTDGLAIGVAFSQSLTGGFSTAIAVFCHELPHELGDLAVLLSAGWPVRRLLVFSGLSALLGFVGVLAGSALGNHWASHSPWILTLTAGVFLYVALADMMPEMLHGACGSVSPLKRFLLQALGLLTGGAIMLCIALFEDHIAVSLGENSLGEN.

Residues 1 to 242 (MGGQTVWMTL…HSQASKTSEG (242 aa)) are Extracellular-facing. The segment at 108–148 (KHPSQSISHSHSHEDHHPSQGTTNSPPLRESLDAKSALSGS) is disordered. The chain crosses the membrane as a helical span at residues 243–263 (FLIALGWASLALLVISLPSLV). The Cytoplasmic portion of the chain corresponds to 264 to 314 (ALGMAPLLQPSVLQVFLCPMAGMAVGTLCGDALLHLMPHAIFSQHTDHQNA). Residues 315-335 (VFKGLSVLGGLYLLFIFESLL) traverse the membrane as a helical segment. Residues 336–408 (GLKQHFKNLK…DGIHNLTDGL (73 aa)) lie on the Extracellular side of the membrane. Residues 363–374 (TSSANQNESSGH) show a composition bias toward polar residues. The disordered stretch occupies residues 363–383 (TSSANQNESSGHGHSHGQAEP). The chain crosses the membrane as a helical span at residues 409-429 (AIGVAFSQSLTGGFSTAIAVF). Over 430–452 (CHELPHELGDLAVLLSAGWPVRR) the chain is Cytoplasmic. Residues 453-473 (LLVFSGLSALLGFVGVLAGSA) form a helical membrane-spanning segment. Residues 474-482 (LGNHWASHS) are Extracellular-facing. Residues 483-503 (PWILTLTAGVFLYVALADMMP) traverse the membrane as a helical segment. Over 504–518 (EMLHGACGSVSPLKR) the chain is Cytoplasmic. Residues 519–539 (FLLQALGLLTGGAIMLCIALF) form a helical membrane-spanning segment. Over 540–555 (EDHIAVSLGENSLGEN) the chain is Extracellular.

The protein belongs to the ZIP transporter (TC 2.A.5) family.

The protein localises to the basolateral cell membrane. The catalysed reaction is Zn(2+)(in) = Zn(2+)(out). In terms of biological role, uniporter that transports zinc(2+) into polarized cells of enterocytes, pancreatic acinar and endoderm cells across the basolateral membrane and participates, notably, in zinc excretion from the intestine by the uptake of zinc from the blood into the intestine. The transport mechanism is temperature- and concentration-dependent and saturable. Mediates zinc homeostasis that is essential for venous angiogenesis. This Danio rerio (Zebrafish) protein is Zinc transporter ZIP5 (slc39a5).